A 438-amino-acid chain; its full sequence is Exoglucanase 3 (438 aa).

A signal peptide spans 1–20 (MFKFAALLALASLVPGFVQA). The 39-residue stretch at 21–59 (QSPVWGQCGGNGWTGPTTCASGSTCVKQNDFYSQCLPNN) folds into the CBM1 domain. 2 disulfide bridges follow: C28-C45 and C39-C55. A disordered region spans residues 57–90 (PNNQAPPSTTTQPGTTPPATTTSGGTGPTSGAGN). The linker stretch occupies residues 60–87 (QAPPSTTTQPGTTPPATTTSGGTGPTSG). The segment covering 61-79 (APPSTTTQPGTTPPATTTS) has biased composition (low complexity). The tract at residues 88-438 (AGNPYTGKTV…TLVANANPAL (351 aa)) is catalytic. Disulfide bonds link C170–C229 and C360–C407. D215 acts as the Proton donor in catalysis. The active-site Nucleophile is D393.

This sequence belongs to the glycosyl hydrolase 6 (cellulase B) family.

It catalyses the reaction Hydrolysis of (1-&gt;4)-beta-D-glucosidic linkages in cellulose and cellotetraose, releasing cellobiose from the non-reducing ends of the chains.. In terms of biological role, shows enzymatic activity towards crystalline cellulose. At long reaction times. It is also able to degrade carboxymethyl cellulose and barley B-glucan. This is Exoglucanase 3 (cel3) from Agaricus bisporus (White button mushroom).